The primary structure comprises 266 residues: Thymidylate synthase (266 aa).

Position 24 (Arg24) interacts with dUMP. (6R)-5,10-methylene-5,6,7,8-tetrahydrofolate is bound at residue His54. 129 to 130 is a dUMP binding site; that stretch reads RR. Cys149 acts as the Nucleophile in catalysis. DUMP is bound by residues 169–172, Asn180, and 210–212; these read RSAD and HIY. Asp172 contributes to the (6R)-5,10-methylene-5,6,7,8-tetrahydrofolate binding site. Ala265 is a binding site for (6R)-5,10-methylene-5,6,7,8-tetrahydrofolate.

The protein belongs to the thymidylate synthase family. Bacterial-type ThyA subfamily. In terms of assembly, homodimer.

The protein localises to the cytoplasm. It catalyses the reaction dUMP + (6R)-5,10-methylene-5,6,7,8-tetrahydrofolate = 7,8-dihydrofolate + dTMP. It functions in the pathway pyrimidine metabolism; dTTP biosynthesis. Catalyzes the reductive methylation of 2'-deoxyuridine-5'-monophosphate (dUMP) to 2'-deoxythymidine-5'-monophosphate (dTMP) while utilizing 5,10-methylenetetrahydrofolate (mTHF) as the methyl donor and reductant in the reaction, yielding dihydrofolate (DHF) as a by-product. This enzymatic reaction provides an intracellular de novo source of dTMP, an essential precursor for DNA biosynthesis. The sequence is that of Thymidylate synthase from Mycobacterium bovis (strain ATCC BAA-935 / AF2122/97).